The primary structure comprises 307 residues: Probable GTP 3',8-cyclase (307 aa).

A Radical SAM core domain is found at 5 to 231 (RFGRPVTNLR…MHRRKKYFIP (227 aa)). Arg-14 contributes to the GTP binding site. 3 residues coordinate [4Fe-4S] cluster: Cys-21, Cys-25, and Cys-28. A GTP-binding site is contributed by Lys-62. Gly-66 is an S-adenosyl-L-methionine binding site. GTP is bound at residue Thr-91. Ser-115 lines the S-adenosyl-L-methionine pocket. Lys-151 is a binding site for GTP. Met-190 is an S-adenosyl-L-methionine binding site. Residues Cys-251 and Cys-254 each contribute to the [4Fe-4S] cluster site. 256–258 (RLR) lines the GTP pocket. Cys-268 contacts [4Fe-4S] cluster.

This sequence belongs to the radical SAM superfamily. MoaA family. It depends on [4Fe-4S] cluster as a cofactor.

The catalysed reaction is GTP + AH2 + S-adenosyl-L-methionine = (8S)-3',8-cyclo-7,8-dihydroguanosine 5'-triphosphate + 5'-deoxyadenosine + L-methionine + A + H(+). It functions in the pathway cofactor biosynthesis; molybdopterin biosynthesis. Functionally, catalyzes the cyclization of GTP to (8S)-3',8-cyclo-7,8-dihydroguanosine 5'-triphosphate. The protein is Probable GTP 3',8-cyclase of Thermococcus kodakarensis (strain ATCC BAA-918 / JCM 12380 / KOD1) (Pyrococcus kodakaraensis (strain KOD1)).